The sequence spans 405 residues: Accessory Sec system protein translocase subunit SecY2 (405 aa).

10 helical membrane-spanning segments follow: residues 14–34 (MCTLFLLFIYVLGSRIALPFV), 65–85 (LFSIGLSPWMSAMILWQMFSF), 104–124 (MYLTLGIALIQALALTTNLPV), 131–151 (FLVFLLNTSLLVAGTFFLVWL), 156–176 (ATIGVGGPVVILLASMVASLP), 190–210 (LGLLFLLLVLGVLFTYLVVLF), 243–263 (GMPYMYVMSLMGLPSYLLLLL), 285–305 (PLWIYAYILILFVFSIAFAFV), 343–363 (FALIGAVFNVTLAGVPILFVL), and 368–388 (LLKVSMIPGLFLILSGMLFTI).

It belongs to the SecY/SEC61-alpha family. SecY2 subfamily. As to quaternary structure, component of the accessory SecA2/SecY2 protein translocase complex required to export cell wall proteins. May form heterotrimers with SecE and SecG subunits.

The protein resides in the cell membrane. Functionally, part of the accessory SecA2/SecY2 system specifically required for export of possible cell wall proteins. The central subunit of a protein translocation channel. The protein is Accessory Sec system protein translocase subunit SecY2 of Streptococcus oralis (strain Uo5).